The following is a 429-amino-acid chain: Gamma-glutamyl phosphate reductase (429 aa).

The protein belongs to the gamma-glutamyl phosphate reductase family.

The protein resides in the cytoplasm. It catalyses the reaction L-glutamate 5-semialdehyde + phosphate + NADP(+) = L-glutamyl 5-phosphate + NADPH + H(+). It functions in the pathway amino-acid biosynthesis; L-proline biosynthesis; L-glutamate 5-semialdehyde from L-glutamate: step 2/2. Catalyzes the NADPH-dependent reduction of L-glutamate 5-phosphate into L-glutamate 5-semialdehyde and phosphate. The product spontaneously undergoes cyclization to form 1-pyrroline-5-carboxylate. The polypeptide is Gamma-glutamyl phosphate reductase (Rhizorhabdus wittichii (strain DSM 6014 / CCUG 31198 / JCM 15750 / NBRC 105917 / EY 4224 / RW1) (Sphingomonas wittichii)).